The primary structure comprises 596 residues: Elongation factor 4 (596 aa).

A tr-type G domain is found at 2–183; that stretch reads KNIRNFSIIA…EIIRRIPAPN (182 aa). Residues 14–19 and 130–133 each bind GTP; these read DHGKST and NKID.

Belongs to the TRAFAC class translation factor GTPase superfamily. Classic translation factor GTPase family. LepA subfamily.

The protein resides in the cell inner membrane. It carries out the reaction GTP + H2O = GDP + phosphate + H(+). Functionally, required for accurate and efficient protein synthesis under certain stress conditions. May act as a fidelity factor of the translation reaction, by catalyzing a one-codon backward translocation of tRNAs on improperly translocated ribosomes. Back-translocation proceeds from a post-translocation (POST) complex to a pre-translocation (PRE) complex, thus giving elongation factor G a second chance to translocate the tRNAs correctly. Binds to ribosomes in a GTP-dependent manner. This is Elongation factor 4 from Wolinella succinogenes (strain ATCC 29543 / DSM 1740 / CCUG 13145 / JCM 31913 / LMG 7466 / NCTC 11488 / FDC 602W) (Vibrio succinogenes).